Reading from the N-terminus, the 462-residue chain is Anthranilate synthase component 1 (462 aa).

Residues serine 46 and 243–245 (PHM) each bind L-tryptophan. Position 278–279 (278–279 (GT)) interacts with chorismate. Glutamate 305 contacts Mg(2+). Chorismate is bound by residues tyrosine 394, arginine 414, 428-430 (SGG), and glycine 430. Residue glutamate 444 coordinates Mg(2+).

It belongs to the anthranilate synthase component I family. In terms of assembly, heterotetramer consisting of two non-identical subunits: a beta subunit (TrpG) and a large alpha subunit (TrpE). Mg(2+) is required as a cofactor.

The catalysed reaction is chorismate + L-glutamine = anthranilate + pyruvate + L-glutamate + H(+). Its pathway is amino-acid biosynthesis; L-tryptophan biosynthesis; L-tryptophan from chorismate: step 1/5. With respect to regulation, feedback inhibited by tryptophan. In terms of biological role, part of a heterotetrameric complex that catalyzes the two-step biosynthesis of anthranilate, an intermediate in the biosynthesis of L-tryptophan. In the first step, the glutamine-binding beta subunit (TrpG) of anthranilate synthase (AS) provides the glutamine amidotransferase activity which generates ammonia as a substrate that, along with chorismate, is used in the second step, catalyzed by the large alpha subunit of AS (TrpE) to produce anthranilate. In the absence of TrpG, TrpE can synthesize anthranilate directly from chorismate and high concentrations of ammonia. This chain is Anthranilate synthase component 1 (trpE), found in Leptospira biflexa.